The primary structure comprises 182 residues: 3-hydroxyanthranilate 3,4-dioxygenase (182 aa).

Arg46 serves as a coordination point for O2. Fe cation-binding residues include His50, Glu56, and His96. Substrate is bound at residue Glu56. Substrate contacts are provided by Arg100 and Glu111. Residues Cys126, Cys129, Cys163, and Cys166 each contribute to the Fe cation site.

It belongs to the 3-HAO family. In terms of assembly, homodimer. Requires Fe(2+) as cofactor.

It catalyses the reaction 3-hydroxyanthranilate + O2 = (2Z,4Z)-2-amino-3-carboxymuconate 6-semialdehyde. Its pathway is cofactor biosynthesis; NAD(+) biosynthesis; quinolinate from L-kynurenine: step 3/3. In terms of biological role, catalyzes the oxidative ring opening of 3-hydroxyanthranilate to 2-amino-3-carboxymuconate semialdehyde, which spontaneously cyclizes to quinolinate. The sequence is that of 3-hydroxyanthranilate 3,4-dioxygenase from Brucella anthropi (strain ATCC 49188 / DSM 6882 / CCUG 24695 / JCM 21032 / LMG 3331 / NBRC 15819 / NCTC 12168 / Alc 37) (Ochrobactrum anthropi).